The chain runs to 95 residues: Large ribosomal subunit protein uL24c (95 aa).

It belongs to the universal ribosomal protein uL24 family. Part of the 50S ribosomal subunit.

The protein localises to the plastid. It localises to the chloroplast. Its function is as follows. One of two assembly initiator proteins, it binds directly to the 5'-end of the 23S rRNA, where it nucleates assembly of the 50S subunit. The protein is Large ribosomal subunit protein uL24c (rpl24) of Porphyra purpurea (Red seaweed).